The sequence spans 386 residues: Chaperone protein DnaJ (386 aa).

Residues 6–71 (DYYEILGVDR…QKRARYDQFG (66 aa)) form the J domain. A CR-type zinc finger spans residues 144–226 (GTEKEVTVSR…CGGKGRVRKH (83 aa)). Zn(2+) is bound by residues Cys-157, Cys-160, Cys-174, Cys-177, Cys-200, Cys-203, Cys-214, and Cys-217. 4 CXXCXGXG motif repeats span residues 157–164 (CPTCSGSG), 174–181 (CRQCNGTG), 200–207 (CDVCHGEG), and 214–221 (CETCGGKG).

The protein belongs to the DnaJ family. In terms of assembly, homodimer. The cofactor is Zn(2+).

The protein resides in the cytoplasm. Participates actively in the response to hyperosmotic and heat shock by preventing the aggregation of stress-denatured proteins and by disaggregating proteins, also in an autonomous, DnaK-independent fashion. Unfolded proteins bind initially to DnaJ; upon interaction with the DnaJ-bound protein, DnaK hydrolyzes its bound ATP, resulting in the formation of a stable complex. GrpE releases ADP from DnaK; ATP binding to DnaK triggers the release of the substrate protein, thus completing the reaction cycle. Several rounds of ATP-dependent interactions between DnaJ, DnaK and GrpE are required for fully efficient folding. Also involved, together with DnaK and GrpE, in the DNA replication of plasmids through activation of initiation proteins. The chain is Chaperone protein DnaJ from Acetivibrio thermocellus (strain ATCC 27405 / DSM 1237 / JCM 9322 / NBRC 103400 / NCIMB 10682 / NRRL B-4536 / VPI 7372) (Clostridium thermocellum).